A 377-amino-acid polypeptide reads, in one-letter code: Protein RecA (377 aa).

66 to 73 (GPESSGKT) lines the ATP pocket. The segment at 329–377 (VGVRPEEPTAEPGADAAVTSAAAATDDTAKTVSAPAAKTTKSKAAAAKS) is disordered. The segment covering 342–377 (ADAAVTSAAAATDDTAKTVSAPAAKTTKSKAAAAKS) has biased composition (low complexity).

Belongs to the RecA family.

The protein localises to the cytoplasm. In terms of biological role, can catalyze the hydrolysis of ATP in the presence of single-stranded DNA, the ATP-dependent uptake of single-stranded DNA by duplex DNA, and the ATP-dependent hybridization of homologous single-stranded DNAs. It interacts with LexA causing its activation and leading to its autocatalytic cleavage. The sequence is that of Protein RecA from Streptomyces avermitilis (strain ATCC 31267 / DSM 46492 / JCM 5070 / NBRC 14893 / NCIMB 12804 / NRRL 8165 / MA-4680).